The chain runs to 380 residues: Apelin receptor (380 aa).

Residues 1–30 (MEEGGDFDNYYGADNQSECEYTDWKSSGAL) lie on the Extracellular side of the membrane. Asn-15 carries an N-linked (GlcNAc...) asparagine glycan. Disulfide bonds link Cys-19–Cys-281 and Cys-102–Cys-181. A helical transmembrane segment spans residues 31-54 (IPAIYMLVFLLGTTGNGLVLWTVF). Topologically, residues 55–64 (RSSREKRRSA) are cytoplasmic. A helical membrane pass occupies residues 65–86 (DIFIASLAVADLTFVVTLPLWA). The Extracellular portion of the chain corresponds to 87-99 (TYTYRDYDWPFGT). The chain crosses the membrane as a helical span at residues 100-125 (FSCKLSSYLIFVNMYASVFCLTGLSF). Residues 126-146 (DRYLAIVRPVANARLRLRVSG) lie on the Cytoplasmic side of the membrane. Residues 147–164 (AVATAVLWVLAALLAMPV) traverse the membrane as a helical segment. Residues 165-198 (MVFRTTGDLENTTKVQCYMDYSMVATVSSDWAWE) lie on the Extracellular side of the membrane. Asn-175 carries N-linked (GlcNAc...) asparagine glycosylation. Residues 199–223 (VGLGVSSTTVGFVVPFTIMLTCYFF) form a helical membrane-spanning segment. The Cytoplasmic segment spans residues 224 to 246 (IAQTIAGHFRKERIEGLRKRRRL). The chain crosses the membrane as a helical span at residues 247–270 (LSIIVVLVVTFALCWMPYHLVKTL). Topologically, residues 271–289 (YMLGSLLHWPCDFDLFLMN) are extracellular. A helical membrane pass occupies residues 290–312 (VFPYCTCISYVNSCLNPFLYAFF). Topologically, residues 313–380 (DPRFRQACTS…PYSQETLVVD (68 aa)) are cytoplasmic. Residues 342–351 (KSASYSSGHS) show a composition bias toward low complexity. The interval 342-380 (KSASYSSGHSQGPGPNMGKGGEQMHEKSIPYSQETLVVD) is disordered. The span at 371-380 (PYSQETLVVD) shows a compositional bias: polar residues.

Belongs to the G-protein coupled receptor 1 family. Homodimer; dimerization inhibits APLNR-mediated G protein and beta-arrestin signaling pathways compared to monomeric APLNR.

The protein localises to the cell membrane. Its function is as follows. G protein-coupled receptor for peptide hormones apelin (APLN) and apelin receptor early endogenous ligand (APELA/ELA), that plays a role in the regulation of normal cardiovascular function and fluid homeostasis. When acting as apelin receptor, activates both G(i) protein pathway that inhibits adenylate cyclase activity, and the beta-arrestin pathway that promotes internalization of the receptor. APLNR/APJ also functions as mechanoreceptor that is activated by pathological stimuli in a G-protein-independent fashion to induce beta-arrestin signaling, hence eliciting cardiac hypertrophy. However, the presence of apelin ligand blunts cardiac hypertrophic induction from APLNR/APJ on response to pathological stimuli. Plays a key role in early development such as gastrulation, blood vessels formation and heart morphogenesis by acting as a APELA receptor. May promote angioblast migration toward the embryonic midline, i.e. the position of the future vessel formation, during vasculogenesis. Promotes sinus venosus (SV)-derived endothelial cells migration into the developing heart to promote coronary blood vessel development. Also plays a role in various processes in adults such as regulation of blood vessel formation, blood pressure, heart contractility and heart failure. (Microbial infection) Alternative coreceptor with CD4 for HIV-1 infection; may be involved in the development of AIDS dementia. The protein is Apelin receptor (APLNR) of Macaca mulatta (Rhesus macaque).